The primary structure comprises 209 residues: Zinc finger SWIM domain-containing protein sws1 (209 aa).

Residues 1 to 30 (MQQGHFTSNSYHSKTLNSSSLPVSSKFSHT) are compositionally biased toward polar residues. The segment at 1-33 (MQQGHFTSNSYHSKTLNSSSLPVSSKFSHTNDP) is disordered. The SWIM-type zinc-finger motif lies at 143–203 (TTIDLKYWYC…HILAASILRA (61 aa)).

As to quaternary structure, interacts with rdl1, rlp1 and srs2.

Its subcellular location is the cytoplasm. The protein resides in the nucleus. It localises to the nucleoplasm. Its function is as follows. Involved in early stages of the homologous recombination repair (HRR) pathway of double-stranded DNA breaks arising during DNA replication or induced by DNA-damaging agents. The protein is Zinc finger SWIM domain-containing protein sws1 (sws1) of Schizosaccharomyces pombe (strain 972 / ATCC 24843) (Fission yeast).